Consider the following 542-residue polypeptide: uncharacterized protein (542 aa).

5 helical membrane passes run 4 to 23 (FVENQLLALVAIMGIGLLLG), 28 to 47 (FGFRLGVAAVLFVGLAFSTI), 51 to 70 (ITVPPLIYVVGLALFVYTIG), 91 to 113 (LALGAIIATTAIAWVVIKALGLA), and 160 to 182 (YSLTYPLGVLVVILTIAVCGGLF). RCK C-terminal domains lie at 190 to 272 (AKNA…LLGE) and 274 to 355 (VDGH…IFGD). Transmembrane regions (helical) follow at residues 363 to 385 (FNLVPLVVGLSLGVLVGMMEFPL), 390 to 412 (ALSLGNAGGPLLIALLLGAMGRT), 425 to 447 (LALRQLGITMFLAAIGTTAGAGF), 457 to 479 (LLIIGVGALLTLVISVLVLVIGH), and 519 to 541 (YTSVYPLAMVAKIIAAQVLLFLL).

It belongs to the AAE transporter (TC 2.A.81) family.

The protein localises to the cell membrane. This is an uncharacterized protein from Corynebacterium efficiens (strain DSM 44549 / YS-314 / AJ 12310 / JCM 11189 / NBRC 100395).